We begin with the raw amino-acid sequence, 227 residues long: uncharacterized protein (227 aa).

Helical transmembrane passes span 7–24 (FVYA…VTWA) and 135–157 (VVVI…LMCL).

Belongs to the TMEM9 family.

The protein localises to the membrane. This is an uncharacterized protein from Drosophila melanogaster (Fruit fly).